The following is a 339-amino-acid chain: UDP-N-acetylglucosamine--N-acetylmuramyl-(pentapeptide) pyrophosphoryl-undecaprenol N-acetylglucosamine transferase (339 aa).

UDP-N-acetyl-alpha-D-glucosamine is bound by residues 9 to 11 (TGG), Asn-119, Arg-160, Ser-188, and Gln-280.

The protein belongs to the glycosyltransferase 28 family. MurG subfamily.

The protein localises to the cell inner membrane. It catalyses the reaction di-trans,octa-cis-undecaprenyl diphospho-N-acetyl-alpha-D-muramoyl-L-alanyl-D-glutamyl-meso-2,6-diaminopimeloyl-D-alanyl-D-alanine + UDP-N-acetyl-alpha-D-glucosamine = di-trans,octa-cis-undecaprenyl diphospho-[N-acetyl-alpha-D-glucosaminyl-(1-&gt;4)]-N-acetyl-alpha-D-muramoyl-L-alanyl-D-glutamyl-meso-2,6-diaminopimeloyl-D-alanyl-D-alanine + UDP + H(+). The protein operates within cell wall biogenesis; peptidoglycan biosynthesis. Functionally, cell wall formation. Catalyzes the transfer of a GlcNAc subunit on undecaprenyl-pyrophosphoryl-MurNAc-pentapeptide (lipid intermediate I) to form undecaprenyl-pyrophosphoryl-MurNAc-(pentapeptide)GlcNAc (lipid intermediate II). The protein is UDP-N-acetylglucosamine--N-acetylmuramyl-(pentapeptide) pyrophosphoryl-undecaprenol N-acetylglucosamine transferase of Thermus thermophilus (strain ATCC BAA-163 / DSM 7039 / HB27).